A 158-amino-acid polypeptide reads, in one-letter code: Ribosome maturation factor RimP (158 aa).

This sequence belongs to the RimP family.

The protein localises to the cytoplasm. In terms of biological role, required for maturation of 30S ribosomal subunits. This Lactobacillus helveticus (strain DPC 4571) protein is Ribosome maturation factor RimP.